Here is a 528-residue protein sequence, read N- to C-terminus: T-complex protein 1 subunit gamma (528 aa).

A Phosphoserine modification is found at Ser250. A disulfide bridge links Cys364 with Cys370.

The protein belongs to the TCP-1 chaperonin family. As to quaternary structure, heterooligomeric complex of about 850 to 900 kDa that forms two stacked rings, 12 to 16 nm in diameter.

Its subcellular location is the cytoplasm. Its function is as follows. Molecular chaperone; assists the folding of proteins upon ATP hydrolysis. Known to play a role, in vitro, in the folding of actin and tubulin. This is T-complex protein 1 subunit gamma (cct3) from Schizosaccharomyces pombe (strain 972 / ATCC 24843) (Fission yeast).